A 251-amino-acid chain; its full sequence is Flagellar L-ring protein (251 aa).

An N-terminal signal peptide occupies residues 1–17; the sequence is MIRKLAALIVAAAALQA. Residue Cys18 is the site of N-palmitoyl cysteine attachment. A lipid anchor (S-diacylglycerol cysteine) is attached at Cys18.

It belongs to the FlgH family. In terms of assembly, the basal body constitutes a major portion of the flagellar organelle and consists of four rings (L,P,S, and M) mounted on a central rod.

It localises to the cell outer membrane. The protein resides in the bacterial flagellum basal body. In terms of biological role, assembles around the rod to form the L-ring and probably protects the motor/basal body from shearing forces during rotation. The sequence is that of Flagellar L-ring protein from Maricaulis maris (strain MCS10) (Caulobacter maris).